An 863-amino-acid chain; its full sequence is MKSSEIRQKFLEFFEARGHVIVPSSPLVPGNDPTLLFTNAGMVQFKDVFLGQDKRPYVRAVSSQRCVRAGGKHNDLENVGYTARHHTFFEMLGNFSFGDYFKRKAILFAWEFLTGSLGIPREKLWATVYAEDDEAADIWLNEVGIDPSRLVRIATSDNFWQMGDTGPCGPCSEIFYDHGPAVAGGPPGSENAEGDRYIEIWNLVFMQYNRDASGELHPLPKPSVDTGMGLERIAAVMQQVHSNYEIDLFRSLIEAAARVTGSKDLSNNSLKVIADHIRACAFLITDGVIPGNEGRGYVLRRILRRAIRHGYRLGQKQPFFYLLVDDLVDVMGPAYPELTRARKHVAGVIRQEEERFAETLENGMEVLEAALSHGNETLSGEIVFRLYDTFGFPVDLTADIARERGIVIDMAGFETCMAQQRDRARASGKFTMQTGLEYTGQPTEFHGYATLQHEAQILALYKQGSRVDFIEADDEAVVVLDQTPFYAESGGQAGDSGELLSGSGTFTVNDTQKIQAGVFGHNGMLSSGRMAIGDRVIARVDQIARTNTAYNHSATHLLHAALRQVLGNHVTQKGSLVDASRLRFDFSHNSAMQENEIRQVENLVNAQIRKNHEVATQLMTYDDAVKQGAMALFGEKYGDTVRVVAMGDFSTELCGGTHVSYSGDIGFFRIVAESGVAAGIRRIEALTGDAALAYTQQQEQQLQQVADALKAAPQEAAQKLSQILDNIRQMEKEIATLRSKLAGVQSTSLIEQAQEIKGIRVLATTLENVNVKTLRETLDNFKNRLKSCVVVLGTIEKDKVTLIAGVTDDLTVKLKAGDLINFVAQQVGGKGGGRADMAQAGGTLPEKLPQALASVPSWVEQNL.

Zn(2+) contacts are provided by histidine 552, histidine 556, cysteine 654, and histidine 658.

It belongs to the class-II aminoacyl-tRNA synthetase family. It depends on Zn(2+) as a cofactor.

The protein localises to the cytoplasm. It carries out the reaction tRNA(Ala) + L-alanine + ATP = L-alanyl-tRNA(Ala) + AMP + diphosphate. Catalyzes the attachment of alanine to tRNA(Ala) in a two-step reaction: alanine is first activated by ATP to form Ala-AMP and then transferred to the acceptor end of tRNA(Ala). Also edits incorrectly charged Ser-tRNA(Ala) and Gly-tRNA(Ala) via its editing domain. The sequence is that of Alanine--tRNA ligase from Nitrosomonas europaea (strain ATCC 19718 / CIP 103999 / KCTC 2705 / NBRC 14298).